The following is a 435-amino-acid chain: Xylose isomerase (435 aa).

Active-site residues include His-100 and Asp-103. Residues Glu-231, Glu-267, His-270, Asp-295, Asp-306, Asp-308, and Asp-338 each contribute to the Mg(2+) site.

The protein belongs to the xylose isomerase family. As to quaternary structure, homotetramer. It depends on Mg(2+) as a cofactor.

The protein localises to the cytoplasm. It catalyses the reaction alpha-D-xylose = alpha-D-xylulofuranose. This Brucella anthropi (strain ATCC 49188 / DSM 6882 / CCUG 24695 / JCM 21032 / LMG 3331 / NBRC 15819 / NCTC 12168 / Alc 37) (Ochrobactrum anthropi) protein is Xylose isomerase.